Reading from the N-terminus, the 521-residue chain is Importin subunit alpha-4 (521 aa).

A disordered region spans residues 1–29; it reads MAENPSLENHRIKSFKNKGRDVETMRRHR. Alanine 2 bears the N-acetylalanine mark. The IBB domain maps to 2-58; the sequence is AENPSLENHRIKSFKNKGRDVETMRRHRNEVTVELRKNKRDEHLLKKRNVPQEESLE. Residues 18–29 are compositionally biased toward basic and acidic residues; that stretch reads KGRDVETMRRHR. The short motif at 43-52 is the Nuclear localization signal element; that stretch reads EHLLKKRNVP. Serine 56 and serine 60 each carry phosphoserine. One copy of the ARM 1; truncated repeat lies at 66–106; sequence FKAQNVTLEAILQNATSDNPVVQLSAVQAARKLLSSDRNPP. 8 ARM repeats span residues 107–149, 150–194, 195–233, 234–278, 279–318, 319–360, 361–400, and 401–443; these read IDDL…TSAQ, TQAV…CRDY, VISL…NKDP, PPPM…EQIQ, MVID…TDEQ, TQVV…NQQQ, VQAV…ISGR, and KDQV…IMAG. The segment at 137 to 229 is NLS binding site (major); sequence WALTNIASGT…VTWVIVNLCR (93 aa). Residues 306–394 are NLS binding site (minor); sequence RAVGNIVTGT…QKEAAWAISN (89 aa). Residues 447-485 form an ARM 10; atypical repeat; that stretch reads STIAEIIEECGGLEKIEVLQQHENEDIYKLAFEIIDQYF. Tyrosine 484 carries the post-translational modification Phosphotyrosine.

Belongs to the importin alpha family. Forms a complex with importin subunit beta-1. Interacts with DDX21. Interacts with NCBP1, NCBP2/CBP20 and NCBP3. Interacts with RCC1. Interacts with ZC3H11A. As to quaternary structure, (Microbial infection) Interacts with HIV-1 integrase; this interaction might play a role in nuclear import of HIV pre-integration complex. In terms of assembly, (Microbial infection) Interacts with influenza virus nucleoprotein; this interaction might play a role in nuclear import of viral genome. In terms of tissue distribution, ubiquitous. Highest levels in heart and skeletal muscle.

It localises to the cytoplasm. It is found in the nucleus. In terms of biological role, functions in nuclear protein import as an adapter protein for nuclear receptor KPNB1. Binds specifically and directly to substrates containing either a simple or bipartite NLS motif. Docking of the importin/substrate complex to the nuclear pore complex (NPC) is mediated by KPNB1 through binding to nucleoporin FxFG repeats and the complex is subsequently translocated through the pore by an energy requiring, Ran-dependent mechanism. At the nucleoplasmic side of the NPC, Ran binds to importin-beta and the three components separate and importin-alpha and -beta are re-exported from the nucleus to the cytoplasm where GTP hydrolysis releases Ran from importin. The directionality of nuclear import is thought to be conferred by an asymmetric distribution of the GTP- and GDP-bound forms of Ran between the cytoplasm and nucleus. In vitro, mediates the nuclear import of human cytomegalovirus UL84 by recognizing a non-classical NLS. Recognizes NLSs of influenza A virus nucleoprotein probably through ARM repeats 7-9. This chain is Importin subunit alpha-4 (KPNA3), found in Homo sapiens (Human).